A 72-amino-acid polypeptide reads, in one-letter code: Conotoxin LvVIA (72 aa).

A signal peptide spans 1–17 (VLIIAVLFLTASELVTA). Positions 18–41 (DYTRDKWQYRAASLRDAMRNFRDT) are excised as a propeptide. 3 cysteine pairs are disulfide-bonded: C44-C58, C51-C63, and C57-C70.

Belongs to the conotoxin O1 superfamily. As to expression, expressed by the venom duct.

The protein localises to the secreted. This Conus lividus (Livid cone) protein is Conotoxin LvVIA.